We begin with the raw amino-acid sequence, 291 residues long: Presqualene diphosphate synthase (291 aa).

A disordered region spans residues 1 to 23; that stretch reads MTSAMKKIQPEAFSEKSSDSQAS.

This sequence belongs to the phytoene/squalene synthase family. HpnD subfamily.

The catalysed reaction is 2 (2E,6E)-farnesyl diphosphate = presqualene diphosphate + diphosphate. It functions in the pathway secondary metabolite biosynthesis; hopanoid biosynthesis. In terms of biological role, involved in the biosynthesis of the hopanoid precursor squalene (SQ) from farnesyl diphosphate (FPP). Catalyzes the first step, the formation of presqualene diphosphate (PSPP) from two molecules of FPP. The protein is Presqualene diphosphate synthase of Zymomonas mobilis subsp. mobilis (strain ATCC 31821 / ZM4 / CP4).